A 272-amino-acid polypeptide reads, in one-letter code: MRIMASHDTPVSPAGILIDLDGTVFRGNELIEGAREAIKTLRRMGKKIVFLSNRGNISRAMCRKKLLGAGIETDVNDIVLSSSVTAAFLKKHYRFSKVWVLGEQGLVDELRLAGVQNASEPKEADWLVISLHETLTYDDLNQAFQAAAGGARIIATNKDRSFPNEDGNAIDVAGMIGAIETSAQAKTELVVGKPSWLMAEAACTAMGLSAHECMIIGDSIESDIAMGKLYGMKSALVLTGSAKQGEQRLYTPDYVLDSIKDVTKLAEEGILI.

The protein belongs to the HAD-like hydrolase superfamily. The cofactor is Mg(2+).

It carries out the reaction sugar phosphate + H2O = sugar + phosphate.. It catalyses the reaction O-phospho-L-serine + H2O = L-serine + phosphate. The enzyme catalyses O-phospho-D-serine + H2O = D-serine + phosphate. Functionally, catalyzes the dephosphorylation of C5 and C6 carbon sugars in vitro. Catalyzes the dephosphorylation of 3'-AMP and phosphoserine in vitro. This Bacillus subtilis (strain 168) protein is Sugar-phosphatase AraL (araL).